Consider the following 639-residue polypeptide: tRNA-dihydrouridine(47) synthase [NAD(P)(+)]-like (639 aa).

2 stretches are compositionally biased toward polar residues: residues 1-19 and 54-65; these read MAESDGSNNENGNLDTVTQ and QTCSELSGNDAE. 2 disordered regions span residues 1-20 and 52-122; these read MAESDGSNNENGNLDTVTQK and DKQT…HSQF. The segment covering 66-85 has biased composition (basic and acidic residues); that stretch reads NTVRAEDAAEPEAKRIKLDD. Residues 103 to 119 show a composition bias toward basic residues; it reads EKKRARGQNKSRPHMKH. C3H1-type zinc fingers lie at residues 122 to 152 and 160 to 190; these read FEENKLCPSVTQECASKCFFGDKCKFLHDVA and EDIRPNCYLYETFGKCIYGVTCRFAKSHLGD. FMN-binding positions include 300-302 and Q354; that span reads PLT. C385 (proton donor) is an active-site residue. FMN-binding positions include K424, H454, 486–488, and 509–510; these read NGD and AR.

Belongs to the Dus family. Dus3 subfamily. FMN is required as a cofactor.

The enzyme catalyses 5,6-dihydrouridine(47) in tRNA + NAD(+) = uridine(47) in tRNA + NADH + H(+). The catalysed reaction is 5,6-dihydrouridine(47) in tRNA + NADP(+) = uridine(47) in tRNA + NADPH + H(+). It catalyses the reaction a 5,6-dihydrouridine in mRNA + NAD(+) = a uridine in mRNA + NADH + H(+). It carries out the reaction a 5,6-dihydrouridine in mRNA + NADP(+) = a uridine in mRNA + NADPH + H(+). Functionally, catalyzes the synthesis of dihydrouridine, a modified base, in various RNAs, such as tRNAs, mRNAs and some long non-coding RNAs (lncRNAs). Mainly modifies the uridine in position 47 (U47) in the D-loop of most cytoplasmic tRNAs. Also able to mediate the formation of dihydrouridine in some mRNAs, thereby regulating their translation. The polypeptide is tRNA-dihydrouridine(47) synthase [NAD(P)(+)]-like (dus3l) (Xenopus tropicalis (Western clawed frog)).